The primary structure comprises 161 residues: RNA pyrophosphohydrolase (161 aa).

A Nudix hydrolase domain is found at P12–K154. The Nudix box motif lies at G46–G67.

The protein belongs to the Nudix hydrolase family. RppH subfamily. It depends on a divalent metal cation as a cofactor.

Functionally, accelerates the degradation of transcripts by removing pyrophosphate from the 5'-end of triphosphorylated RNA, leading to a more labile monophosphorylated state that can stimulate subsequent ribonuclease cleavage. The polypeptide is RNA pyrophosphohydrolase (Rickettsia bellii (strain OSU 85-389)).